A 125-amino-acid chain; its full sequence is Small ribosomal subunit protein eS8 (125 aa).

A disordered region spans residues 1-36 (MKDQGRSTRKRTGGRLHDVSKKKRHQLGREPAETTV). A compositionally biased stretch (basic residues) spans 7 to 26 (STRKRTGGRLHDVSKKKRHQ). Basic and acidic residues predominate over residues 27–36 (LGREPAETTV).

It belongs to the eukaryotic ribosomal protein eS8 family. As to quaternary structure, part of the 30S ribosomal subunit.

The chain is Small ribosomal subunit protein eS8 from Haloquadratum walsbyi (strain DSM 16790 / HBSQ001).